Here is a 96-residue protein sequence, read N- to C-terminus: UPF0235 protein CAB243 (96 aa).

It belongs to the UPF0235 family.

This chain is UPF0235 protein CAB243, found in Chlamydia abortus (strain DSM 27085 / S26/3) (Chlamydophila abortus).